Reading from the N-terminus, the 221-residue chain is UPF0502 protein PSPA7_1674 (221 aa).

Belongs to the UPF0502 family.

This is UPF0502 protein PSPA7_1674 from Pseudomonas paraeruginosa (strain DSM 24068 / PA7) (Pseudomonas aeruginosa (strain PA7)).